The sequence spans 71 residues: Small ribosomal subunit protein bS21 (71 aa).

Positions His37–Tyr71 are disordered. Residues Arg45–Tyr71 are compositionally biased toward basic residues.

The protein belongs to the bacterial ribosomal protein bS21 family.

The polypeptide is Small ribosomal subunit protein bS21 (Alkalilimnicola ehrlichii (strain ATCC BAA-1101 / DSM 17681 / MLHE-1)).